Here is a 135-residue protein sequence, read N- to C-terminus: Small ribosomal subunit protein bS18 (135 aa).

The tract at residues 1 to 65 is disordered; sequence MARPDMGGPK…GDEGGGRRGF (65 aa). A compositionally biased stretch (gly residues) spans 9 to 41; sequence PKTGGFGGPRSGGFGGGGGGGGGFGGGGFGGGR. A compositionally biased stretch (basic and acidic residues) spans 42 to 61; the sequence is GGDRGDRGDRDDRGGDEGGG.

The protein belongs to the bacterial ribosomal protein bS18 family. In terms of assembly, part of the 30S ribosomal subunit. Forms a tight heterodimer with protein bS6.

Binds as a heterodimer with protein bS6 to the central domain of the 16S rRNA, where it helps stabilize the platform of the 30S subunit. This Anaeromyxobacter sp. (strain K) protein is Small ribosomal subunit protein bS18.